Consider the following 114-residue polypeptide: Ribonuclease P protein component (114 aa).

This sequence belongs to the RnpA family. As to quaternary structure, consists of a catalytic RNA component (M1 or rnpB) and a protein subunit.

It catalyses the reaction Endonucleolytic cleavage of RNA, removing 5'-extranucleotides from tRNA precursor.. Its function is as follows. RNaseP catalyzes the removal of the 5'-leader sequence from pre-tRNA to produce the mature 5'-terminus. It can also cleave other RNA substrates such as 4.5S RNA. The protein component plays an auxiliary but essential role in vivo by binding to the 5'-leader sequence and broadening the substrate specificity of the ribozyme. The protein is Ribonuclease P protein component of Buchnera aphidicola subsp. Schizaphis graminum (strain Sg).